We begin with the raw amino-acid sequence, 397 residues long: Exodeoxyribonuclease 7 large subunit (397 aa).

It belongs to the XseA family. In terms of assembly, heterooligomer composed of large and small subunits.

It localises to the cytoplasm. It catalyses the reaction Exonucleolytic cleavage in either 5'- to 3'- or 3'- to 5'-direction to yield nucleoside 5'-phosphates.. Its function is as follows. Bidirectionally degrades single-stranded DNA into large acid-insoluble oligonucleotides, which are then degraded further into small acid-soluble oligonucleotides. In Anaplasma marginale (strain St. Maries), this protein is Exodeoxyribonuclease 7 large subunit.